Reading from the N-terminus, the 228-residue chain is Nuclear phosphoprotein UL3 homolog (228 aa).

It belongs to the alphaherpesvirinae HHV-1 UL3 family. Phosphorylated.

The protein localises to the host nucleus. The protein is Nuclear phosphoprotein UL3 homolog (MDV015) of Gallus gallus (Chicken).